Here is a 215-residue protein sequence, read N- to C-terminus: CUE domain-containing protein 4, mitochondrial (215 aa).

The transit peptide at 1–29 (MQPEQLAGCAVVLTVTVLTLRWMFRVDKG) directs the protein to the mitochondrion. Positions 48 to 90 (VNSEHVHLVKTVFPHLESSAIAYDLQKTKNVDATIENALRGQP) constitute a CUE domain. The segment at 109–191 (GAGASSHSEE…KEREELFRKR (83 aa)) is disordered. Composition is skewed to low complexity over residues 122–140 (SHEV…SLAS) and 153–165 (SSRI…SSSS). Residues 180 to 191 (SKKEREELFRKR) are compositionally biased toward basic and acidic residues.

It is found in the mitochondrion. This chain is CUE domain-containing protein 4, mitochondrial, found in Schizosaccharomyces pombe (strain 972 / ATCC 24843) (Fission yeast).